Here is a 575-residue protein sequence, read N- to C-terminus: Sclareol synthase, chloroplastic (575 aa).

A chloroplast-targeting transit peptide spans 1–51; the sequence is MSLAFNVGVTPFSGQRVGSRKEKFPVQGFPVTTPNRSRLIVNCSLTTIDFM. 5 residues coordinate Mg(2+): D329, D333, N473, S477, and E481. The DDXXD motif motif lies at 329 to 333; it reads DDFFD.

The protein belongs to the terpene synthase family.

It is found in the plastid. It localises to the chloroplast. The catalysed reaction is 8-hydroxycopalyl diphosphate + H2O = sclareol + diphosphate. Its pathway is secondary metabolite biosynthesis; terpenoid biosynthesis. Functionally, involved in the biosynthesis of labdane-type diterpenoid including sclareol, a diterpene-diol that is used as fragrance and flavoring, and has anticancer effects (able to kill leukemic and colon cancer cells by apoptosis). Sclareol can also be used as synthesis precursor of ambergris substitution fragance products such as ambrox. Terpene synthase that catalyzes the conversion of 8-hydroxy-copalyl diphosphate to sclareol. In Salvia sclarea (Clary sage), this protein is Sclareol synthase, chloroplastic.